Reading from the N-terminus, the 181-residue chain is Shikimate kinase 2 (181 aa).

Position 12-17 (12-17 (GCGKTT)) interacts with ATP. Thr16 and Asp32 together coordinate Mg(2+). Asp34, Arg58, and Gly79 together coordinate substrate. The LID domain stretch occupies residues 112–126 (EAEPEADLRPTLTGK). Arg120 is a binding site for ATP. Arg139 is a substrate binding site.

It belongs to the shikimate kinase family. AroL subfamily. As to quaternary structure, monomer. Mg(2+) serves as cofactor.

The protein localises to the cytoplasm. The catalysed reaction is shikimate + ATP = 3-phosphoshikimate + ADP + H(+). Its pathway is metabolic intermediate biosynthesis; chorismate biosynthesis; chorismate from D-erythrose 4-phosphate and phosphoenolpyruvate: step 5/7. Functionally, catalyzes the specific phosphorylation of the 3-hydroxyl group of shikimic acid using ATP as a cosubstrate. The sequence is that of Shikimate kinase 2 from Salmonella dublin (strain CT_02021853).